We begin with the raw amino-acid sequence, 440 residues long: Cell division protein FtsA (440 aa).

Residues 396-440 (VSSSEEQEQHHHQNEVQQRPKGKQKTQAEHNKQSKMKKLLSMFWE) form a disordered region.

Belongs to the FtsA/MreB family. Homodimer. Interacts with FtsZ.

The protein localises to the cell membrane. Cell division protein that is required for the assembly of the Z ring. May serve as a membrane anchor for the Z ring. Binds and hydrolyzes ATP. Also involved in sporulation. In Bacillus subtilis (strain 168), this protein is Cell division protein FtsA.